Here is a 173-residue protein sequence, read N- to C-terminus: Large ribosomal subunit protein uL10 (173 aa).

The protein belongs to the universal ribosomal protein uL10 family. As to quaternary structure, part of the ribosomal stalk of the 50S ribosomal subunit. The N-terminus interacts with L11 and the large rRNA to form the base of the stalk. The C-terminus forms an elongated spine to which L12 dimers bind in a sequential fashion forming a multimeric L10(L12)X complex.

In terms of biological role, forms part of the ribosomal stalk, playing a central role in the interaction of the ribosome with GTP-bound translation factors. The sequence is that of Large ribosomal subunit protein uL10 from Thiobacillus denitrificans (strain ATCC 25259 / T1).